A 311-amino-acid polypeptide reads, in one-letter code: Very-long-chain 3-oxoacyl-CoA reductase-B (311 aa).

A helical transmembrane segment spans residues 8-28 (LFWVGAVTVLWLSVSSLWSLI). Residue 48 to 77 (GKWAVVTGATDGIGKAYAEELARRGFAIVL) coordinates NADP(+). A helical membrane pass occupies residues 125-145 (IGVLVNNVGVSYSYPEFFLNI). Ser-187 contributes to the substrate binding site. The Proton acceptor role is filled by Tyr-200. A helical transmembrane segment spans residues 269–289 (GYLPHAIMGWVTASLLPAKLL).

The protein belongs to the short-chain dehydrogenases/reductases (SDR) family. 17-beta-HSD 3 subfamily.

Its subcellular location is the endoplasmic reticulum membrane. It catalyses the reaction a very-long-chain (3R)-3-hydroxyacyl-CoA + NADP(+) = a very-long-chain 3-oxoacyl-CoA + NADPH + H(+). It carries out the reaction 17beta-estradiol + NAD(+) = estrone + NADH + H(+). The enzyme catalyses 17beta-estradiol + NADP(+) = estrone + NADPH + H(+). Its pathway is lipid metabolism; fatty acid biosynthesis. The protein operates within steroid biosynthesis; estrogen biosynthesis. Its function is as follows. Catalyzes the second of the four reactions of the long-chain fatty acids elongation cycle. This endoplasmic reticulum-bound enzymatic process, allows the addition of two carbons to the chain of long- and very long-chain fatty acids/VLCFAs per cycle. This enzyme has a 3-ketoacyl-CoA reductase activity, reducing 3-ketoacyl-CoA to 3-hydroxyacyl-CoA, within each cycle of fatty acid elongation. Thereby, it may participate in the production of VLCFAs of different chain lengths that are involved in multiple biological processes as precursors of membrane lipids and lipid mediators. May also catalyze the transformation of estrone (E1) into estradiol (E2) and play a role in estrogen formation. This is Very-long-chain 3-oxoacyl-CoA reductase-B (hsd17b12b) from Danio rerio (Zebrafish).